Reading from the N-terminus, the 734-residue chain is MADRSILTREIIVGGRPMILETGRLANQASGAVFVRYGDTAVLVTATVAPTVRAGIDFFPLTVDYEERFYAVGKIPGGFIKRESRPSEKAILSGRLIDRPIRPLFPKEMRNEVQVIATILSVDQDNAPEIAAMVGASAALHISEIPLKFPIGGVIVGRVDGRFVINPVLAQAEKSDMHLVVAGTKDAVMMVEAGAKEVPEEVILEAISFGHETVKEIVAFIERYREEALEMGLAKEKMVIEVAEPDPVLVEAVTGPATEKLDGVLRRCVNERLSKQERDSLLNNIKDELMQKFLADYPEQESLIKDLLDSIEKKLVRRMITEEGLRIDGRALNEVRPISVEVGVLPRPHGSGLFTRGQTQILSVVTLGTVSEEQILDGLGVEESKRFMHHYNFPPYSTGETRPLRSPGRREIGHGALAERALAAVIPGEEEFPYTIRIVSEALESNGSTSMGSVCGSTLALMDAGVPISAPVAGVAMGLIKEGDNFTVLTDIQGFEDHLGDMDFKVAGTAKGITALQMDIKIPGITREVFEKALAQAYEGRMHILNKMLEVLPAPRPELSPHAPRIIHITIDPDKIRDVIGPGGKVIKKIVEETGAEIDIEDDGRVFIAAVDQEKGRKAQEIIETLTKEVQTGEIYTGRVTRITDFGCFVEIIPGVLGMQGKEGLVHISQLAHHRVNRVEDVVKEGDVILVKVTGYDSQGRLKLSKKEATPPPESTAMKEGRAHRPSRRRESAR.

Residues D497 and D503 each coordinate Mg(2+). In terms of domain architecture, KH spans 564 to 623; sequence PRIIHITIDPDKIRDVIGPGGKVIKKIVEETGAEIDIEDDGRVFIAAVDQEKGRKAQEII. Positions 633–707 constitute an S1 motif domain; it reads GEIYTGRVTR…SQGRLKLSKK (75 aa). Residues 700 to 734 are disordered; that stretch reads GRLKLSKKEATPPPESTAMKEGRAHRPSRRRESAR. The segment covering 717 to 734 has biased composition (basic and acidic residues); the sequence is AMKEGRAHRPSRRRESAR.

Belongs to the polyribonucleotide nucleotidyltransferase family. The cofactor is Mg(2+).

Its subcellular location is the cytoplasm. The enzyme catalyses RNA(n+1) + phosphate = RNA(n) + a ribonucleoside 5'-diphosphate. Its function is as follows. Involved in mRNA degradation. Catalyzes the phosphorolysis of single-stranded polyribonucleotides processively in the 3'- to 5'-direction. This chain is Polyribonucleotide nucleotidyltransferase, found in Pelotomaculum thermopropionicum (strain DSM 13744 / JCM 10971 / SI).